The primary structure comprises 573 residues: Vacuolar protein 8 (573 aa).

The tract at residues 1 to 36 is disordered; that stretch reads MAASAADRMGRQRMSGLSCSAPPRPTVVTNPGNKQD. The span at 27 to 36 shows a compositional bias: polar residues; the sequence is VVTNPGNKQD. 9 ARM repeats span residues 60–97, 98–137, 139–178, 180–219, 221–260, 264–303, 305–344, 346–386, and 430–469; these read NRGE…FAEI, TEKD…NLAV, NENK…NLAT, EANK…NMTH, DQNR…NIAV, NRKK…NLAS, SDYQ…NISI, PLNE…NLAA, and DELK…NLSS.

This sequence belongs to the beta-catenin family.

The protein resides in the vacuole membrane. In terms of biological role, functions in both vacuole inheritance and protein targeting from the cytoplasm to vacuole. This chain is Vacuolar protein 8 (VAC8), found in Yarrowia lipolytica (strain CLIB 122 / E 150) (Yeast).